The following is a 206-amino-acid chain: Pyridoxine/pyridoxamine 5'-phosphate oxidase (206 aa).

Residues 54 to 59 (RVVLLK), 69 to 70 (YT), Arg75, Lys76, and Gln98 each bind FMN. Lys59 is a substrate binding site. Substrate-binding residues include Tyr116, Arg120, and Ser124. Residues 133–134 (QS) and Trp178 each bind FMN. 184-186 (RLH) contacts substrate. Residue Arg188 coordinates FMN.

It belongs to the pyridoxamine 5'-phosphate oxidase family. In terms of assembly, homodimer. FMN serves as cofactor.

It carries out the reaction pyridoxamine 5'-phosphate + O2 + H2O = pyridoxal 5'-phosphate + H2O2 + NH4(+). The enzyme catalyses pyridoxine 5'-phosphate + O2 = pyridoxal 5'-phosphate + H2O2. It functions in the pathway cofactor metabolism; pyridoxal 5'-phosphate salvage; pyridoxal 5'-phosphate from pyridoxamine 5'-phosphate: step 1/1. The protein operates within cofactor metabolism; pyridoxal 5'-phosphate salvage; pyridoxal 5'-phosphate from pyridoxine 5'-phosphate: step 1/1. In terms of biological role, catalyzes the oxidation of either pyridoxine 5'-phosphate (PNP) or pyridoxamine 5'-phosphate (PMP) into pyridoxal 5'-phosphate (PLP). This chain is Pyridoxine/pyridoxamine 5'-phosphate oxidase, found in Anaplasma phagocytophilum (strain HZ).